A 395-amino-acid chain; its full sequence is Elongation factor Tu (395 aa).

The tr-type G domain occupies 10-204; the sequence is KPHVNIGTIG…AVDEYIPTPQ (195 aa). The G1 stretch occupies residues 19 to 26; it reads GHVDHGKT. GTP is bound at residue 19–26; sequence GHVDHGKT. T26 serves as a coordination point for Mg(2+). Positions 60 to 64 are G2; that stretch reads GITIS. Positions 81-84 are G3; the sequence is DCPG. GTP-binding positions include 81 to 85 and 136 to 139; these read DCPGH and NKCD. The segment at 136-139 is G4; it reads NKCD. The segment at 174-176 is G5; the sequence is SAL.

The protein belongs to the TRAFAC class translation factor GTPase superfamily. Classic translation factor GTPase family. EF-Tu/EF-1A subfamily. Monomer.

It is found in the cytoplasm. The enzyme catalyses GTP + H2O = GDP + phosphate + H(+). Its function is as follows. GTP hydrolase that promotes the GTP-dependent binding of aminoacyl-tRNA to the A-site of ribosomes during protein biosynthesis. The polypeptide is Elongation factor Tu (Anoxybacillus flavithermus (strain DSM 21510 / WK1)).